A 277-amino-acid chain; its full sequence is Urease accessory protein UreD (277 aa).

Belongs to the UreD family. UreD, UreF and UreG form a complex that acts as a GTP-hydrolysis-dependent molecular chaperone, activating the urease apoprotein by helping to assemble the nickel containing metallocenter of UreC. The UreE protein probably delivers the nickel.

It is found in the cytoplasm. Required for maturation of urease via the functional incorporation of the urease nickel metallocenter. The chain is Urease accessory protein UreD from Sinorhizobium medicae (strain WSM419) (Ensifer medicae).